The sequence spans 208 residues: MSFISNPNIHFYLLAYFIGGIPFGYLLSRFFYNINLQEVGSGSIGATNVLRALKERDPKKAKMMAALTMLLDALKGALVILVAKMAGMSVETQWAIAVLAVVGHCFSPYLKLEGGKGVATGLGVMAVMLPLEAAIGLVVWLVVGKTLKISSLSSLLGLGALLISSFLIHPEIPEIGTHAPLLIIAFVIFYKHIPNLVRLFQGKEGRVV.

6 consecutive transmembrane segments (helical) span residues Pro-7–Leu-27, Met-63–Ala-83, Ala-86–Phe-106, Gly-123–Val-143, Ile-149–His-169, and Pro-170–Tyr-190.

Belongs to the PlsY family. Probably interacts with PlsX.

Its subcellular location is the cell inner membrane. It catalyses the reaction an acyl phosphate + sn-glycerol 3-phosphate = a 1-acyl-sn-glycero-3-phosphate + phosphate. It participates in lipid metabolism; phospholipid metabolism. Catalyzes the transfer of an acyl group from acyl-phosphate (acyl-PO(4)) to glycerol-3-phosphate (G3P) to form lysophosphatidic acid (LPA). This enzyme utilizes acyl-phosphate as fatty acyl donor, but not acyl-CoA or acyl-ACP. The chain is Glycerol-3-phosphate acyltransferase from Wolinella succinogenes (strain ATCC 29543 / DSM 1740 / CCUG 13145 / JCM 31913 / LMG 7466 / NCTC 11488 / FDC 602W) (Vibrio succinogenes).